Here is a 208-residue protein sequence, read N- to C-terminus: ATP-dependent Clp protease proteolytic subunit 1 (208 aa).

The active-site Nucleophile is S108. The active site involves H133.

The protein belongs to the peptidase S14 family. Fourteen ClpP subunits assemble into 2 heptameric rings which stack back to back to give a disk-like structure with a central cavity, resembling the structure of eukaryotic proteasomes.

The protein resides in the cytoplasm. It catalyses the reaction Hydrolysis of proteins to small peptides in the presence of ATP and magnesium. alpha-casein is the usual test substrate. In the absence of ATP, only oligopeptides shorter than five residues are hydrolyzed (such as succinyl-Leu-Tyr-|-NHMec, and Leu-Tyr-Leu-|-Tyr-Trp, in which cleavage of the -Tyr-|-Leu- and -Tyr-|-Trp bonds also occurs).. Cleaves peptides in various proteins in a process that requires ATP hydrolysis. Has a chymotrypsin-like activity. Plays a major role in the degradation of misfolded proteins. This chain is ATP-dependent Clp protease proteolytic subunit 1, found in Corynebacterium glutamicum (strain ATCC 13032 / DSM 20300 / JCM 1318 / BCRC 11384 / CCUG 27702 / LMG 3730 / NBRC 12168 / NCIMB 10025 / NRRL B-2784 / 534).